We begin with the raw amino-acid sequence, 683 residues long: U4/U6 small nuclear ribonucleoprotein Prp3 (683 aa).

A PWI domain is found at 1–87 (MALSKRELDE…HSKSSSDRSR (87 aa)). The segment covering 73–107 (GRSSRHSKSSSDRSRKRELKEVFGDDSEISKESSG) has biased composition (basic and acidic residues). The tract at residues 73–135 (GRSSRHSKSS…IPGPPSESPG (63 aa)) is disordered. Lys-139 is covalently cross-linked (Glycyl lysine isopeptide (Lys-Gly) (interchain with G-Cter in SUMO2)). The segment at 161–183 (SFISPPAPQPKTPSSSQPERLPI) is disordered. Ser-164 carries the phosphoserine modification. Residues Lys-244 and Lys-252 each participate in a glycyl lysine isopeptide (Lys-Gly) (interchain with G-Cter in SUMO2) cross-link. The interval 416 to 550 (NLVEHPAQLN…VHISVYRVRN (135 aa)) is mediates interaction with SART3. Ser-619 is modified (phosphoserine).

In terms of assembly, component of the precatalytic spliceosome (spliceosome B complex). Component of the U4/U6-U5 tri-snRNP complex, a building block of the precatalytic spliceosome (spliceosome B complex). The U4/U6-U5 tri-snRNP complex is composed of the U4, U6 and U5 snRNAs and at least PRPF3, PRPF4, PRPF6, PRPF8, PRPF31, SNRNP200, TXNL4A, SNRNP40, SNRPB, SNRPD1, SNRPD2, SNRPD3, SNRPE, SNRPF, SNRPG, DDX23, CD2BP2, PPIH, SNU13, EFTUD2, SART1 and USP39, plus LSM2, LSM3, LSM4, LSM5, LSM6, LSM7 and LSM8. Interacts directly with PRPF4. Part of a heteromeric complex containing PPIH, PRPF3 and PRPF4 that is stable in the absence of RNA. Interacts with SART3; the interaction is direct and recruits the deubiquitinase USP4 to PRPF3. Interacts with PRPF19. Interacts ('Lys-63'-linked polyubiquitinated) with PRPF8 (via the MPN (JAB/Mov34) domain); may stabilize the U4/U6-U5 tri-snRNP complex. Interacts with ERCC6. Post-translationally, ubiquitinated. Undergoes 'Lys-63'-linked polyubiquitination by PRPF19 and deubiquitination by USP4. 'Lys-63'-linked ubiquitination increases the affinity for PRPF8 and may regulate the assembly of the U4/U6-U5 tri-snRNP complex.

It localises to the nucleus. It is found in the nucleus speckle. In terms of biological role, plays a role in pre-mRNA splicing as component of the U4/U6-U5 tri-snRNP complex that is involved in spliceosome assembly, and as component of the precatalytic spliceosome (spliceosome B complex). The polypeptide is U4/U6 small nuclear ribonucleoprotein Prp3 (Prpf3) (Mus musculus (Mouse)).